Reading from the N-terminus, the 73-residue chain is Large ribosomal subunit protein bL31 (73 aa).

Cysteine 16, cysteine 18, cysteine 38, and cysteine 41 together coordinate Zn(2+).

The protein belongs to the bacterial ribosomal protein bL31 family. Type A subfamily. Part of the 50S ribosomal subunit. Zn(2+) serves as cofactor.

Functionally, binds the 23S rRNA. The sequence is that of Large ribosomal subunit protein bL31 from Vibrio parahaemolyticus serotype O3:K6 (strain RIMD 2210633).